The primary structure comprises 384 residues: Chaperone protein DnaJ (384 aa).

Residues 6-71 (DYYEVLGISK…TKRKTYDQFG (66 aa)) form the J domain. The segment at 141–223 (GKKMSIKVNR…CHGTGNTRKV (83 aa)) adopts a CR-type zinc-finger fold. Zn(2+) is bound by residues Cys-154, Cys-157, Cys-171, Cys-174, Cys-197, Cys-200, Cys-211, and Cys-214. 4 CXXCXGXG motif repeats span residues 154–161 (CEECNGTG), 171–178 (CSTCNGTG), 197–204 (CSACNGTG), and 211–218 (CSKCHGTG).

Belongs to the DnaJ family. Homodimer. Requires Zn(2+) as cofactor.

It is found in the cytoplasm. In terms of biological role, participates actively in the response to hyperosmotic and heat shock by preventing the aggregation of stress-denatured proteins and by disaggregating proteins, also in an autonomous, DnaK-independent fashion. Unfolded proteins bind initially to DnaJ; upon interaction with the DnaJ-bound protein, DnaK hydrolyzes its bound ATP, resulting in the formation of a stable complex. GrpE releases ADP from DnaK; ATP binding to DnaK triggers the release of the substrate protein, thus completing the reaction cycle. Several rounds of ATP-dependent interactions between DnaJ, DnaK and GrpE are required for fully efficient folding. Also involved, together with DnaK and GrpE, in the DNA replication of plasmids through activation of initiation proteins. This chain is Chaperone protein DnaJ, found in Clostridioides difficile (strain 630) (Peptoclostridium difficile).